The chain runs to 40 residues: RNA replication protein (40 aa).

This sequence belongs to the potexviruses/carlaviruses RNA replication protein family.

The enzyme catalyses RNA(n) + a ribonucleoside 5'-triphosphate = RNA(n+1) + diphosphate. The catalysed reaction is ATP + H2O = ADP + phosphate + H(+). Its function is as follows. RNA replication. The central part of this protein possibly functions as an ATP-binding helicase. This Lily symptomless virus (LSV) protein is RNA replication protein.